A 525-amino-acid polypeptide reads, in one-letter code: GMP synthase [glutamine-hydrolyzing] (525 aa).

Residues 9–207 (RILILDFGSQ…VLDICQCEAL (199 aa)) form the Glutamine amidotransferase type-1 domain. The active-site Nucleophile is the C86. Residues H181 and E183 contribute to the active site. The GMPS ATP-PPase domain occupies 208-400 (WTPAKIIDDA…LGLPYNMLYR (193 aa)). An ATP-binding site is contributed by 235 to 241 (SGGVDSS).

As to quaternary structure, homodimer.

The catalysed reaction is XMP + L-glutamine + ATP + H2O = GMP + L-glutamate + AMP + diphosphate + 2 H(+). Its pathway is purine metabolism; GMP biosynthesis; GMP from XMP (L-Gln route): step 1/1. In terms of biological role, catalyzes the synthesis of GMP from XMP. In Pectobacterium atrosepticum (strain SCRI 1043 / ATCC BAA-672) (Erwinia carotovora subsp. atroseptica), this protein is GMP synthase [glutamine-hydrolyzing].